The primary structure comprises 378 residues: MFVNIRRDLHQIPELGFQEFKTQQYILDYLATLPSERLQIKTWRTGILVRVHGTAPTKTIGYRADMDGLPIDEQTDVPFRSTHEGRMHACGHDMHMAIALGVLTHVVHHPIRDDMLFIFQPAEEGPGGALPMLESDEMKQWMPDMILALHIAPAYPVGTIATKEGLLFANTSELFIDLIGKGGHAAFPHETKDMVVAASSLIMQLQTIVSRNVNPLDSAVITIGKLTSGTVQNVIAERARLEGTIRTLSPEAMEKVKGRIEAIVRGIEVAYDCQAHIDYGSMYYQVYNDETLTNEFMQFVEKETDVHLVRCQEAMTGEDFGYMLARIPGFMFWLGVQSPFGLHHAKLNPNEEAIDVAIQLLTRYVTWKGNHKVKEEER.

Asp65 is an active-site residue. Glu124 acts as the Proton acceptor in catalysis.

It belongs to the peptidase M20A family. N-acetyldiaminopimelate deacetylase subfamily.

It carries out the reaction N-acetyl-(2S,6S)-2,6-diaminopimelate + H2O = (2S,6S)-2,6-diaminopimelate + acetate. It functions in the pathway amino-acid biosynthesis; L-lysine biosynthesis via DAP pathway; LL-2,6-diaminopimelate from (S)-tetrahydrodipicolinate (acetylase route): step 3/3. Its function is as follows. Catalyzes the conversion of N-acetyl-diaminopimelate to diaminopimelate and acetate. In Anoxybacillus flavithermus (strain DSM 21510 / WK1), this protein is N-acetyldiaminopimelate deacetylase.